Here is a 764-residue protein sequence, read N- to C-terminus: 5-methyltetrahydropteroyltriglutamate--homocysteine methyltransferase (764 aa).

Residues 16-19 (RELK) and lysine 117 contribute to the 5-methyltetrahydropteroyltri-L-glutamate site. Residues 442–444 (IGS) and glutamate 495 contribute to the L-homocysteine site. L-methionine contacts are provided by residues 442 to 444 (IGS) and glutamate 495. Residues 526–527 (RC) and tryptophan 572 each bind 5-methyltetrahydropteroyltri-L-glutamate. Aspartate 610 contacts L-homocysteine. Residue aspartate 610 participates in L-methionine binding. Glutamate 616 lines the 5-methyltetrahydropteroyltri-L-glutamate pocket. Residues histidine 652, cysteine 654, and glutamate 676 each coordinate Zn(2+). Histidine 705 (proton donor) is an active-site residue. Zn(2+) is bound at residue cysteine 737.

Belongs to the vitamin-B12 independent methionine synthase family. The cofactor is Zn(2+).

It carries out the reaction 5-methyltetrahydropteroyltri-L-glutamate + L-homocysteine = tetrahydropteroyltri-L-glutamate + L-methionine. It functions in the pathway amino-acid biosynthesis; L-methionine biosynthesis via de novo pathway; L-methionine from L-homocysteine (MetE route): step 1/1. Catalyzes the transfer of a methyl group from 5-methyltetrahydrofolate to homocysteine resulting in methionine formation. In Bordetella petrii (strain ATCC BAA-461 / DSM 12804 / CCUG 43448), this protein is 5-methyltetrahydropteroyltriglutamate--homocysteine methyltransferase.